Consider the following 261-residue polypeptide: Kallikrein-1 (261 aa).

An N-terminal signal peptide occupies residues 1–18; sequence MWFLILFLALSLGRNDAA. A propeptide spans 19 to 24 (activation peptide); that stretch reads PPVQSR. The 234-residue stretch at 25-258 folds into the Peptidase S1 domain; sequence VVGGYNCEMN…FTPWIKEVMK (234 aa). Intrachain disulfides connect C31–C173, C50–C66, C152–C219, C184–C198, and C209–C234. Catalysis depends on H65, which acts as the Charge relay system. Residue N108 is glycosylated (N-linked (GlcNAc...) asparagine). Residue D120 is the Charge relay system of the active site. S213 (charge relay system) is an active-site residue.

It belongs to the peptidase S1 family. Kallikrein subfamily. In terms of tissue distribution, high levels in pancreas, submaxillary and parotid glands, spleen, and kidney.

It catalyses the reaction Preferential cleavage of Arg-|-Xaa bonds in small molecule substrates. Highly selective action to release kallidin (lysyl-bradykinin) from kininogen involves hydrolysis of Met-|-Xaa or Leu-|-Xaa.. In Rattus norvegicus (Rat), this protein is Kallikrein-1 (Ngfg).